Here is a 212-residue protein sequence, read N- to C-terminus: Outer surface protein C (212 aa).

The signal sequence occupies residues 1–18 (MKKNTLSAILMTLFLFIS). Cysteine 19 carries N-palmitoyl cysteine lipidation. Cysteine 19 carries the S-diacylglycerol cysteine lipid modification.

Belongs to the OspC lipoprotein family. In terms of assembly, homodimer. Interacts with tick Ixodes ricinus salivary protein Iric-1. Binds human (host) plasminogen. Post-translationally, the N-terminus is blocked.

The protein resides in the cell outer membrane. It is found in the cell surface. Functionally, major immunodominant protein in mammalian hosts. Required for initial stages of mammalian infection. Inhibits macrophage-mediated phagocytosis of the bacteria. Binds human plasminogen; this probably confers an extracellular protease activity on the bacteria that allows it to traverse tissue. Unlike closely related strain B31, its interaction with Ixodes ricinus salivary protein Iric-1 does not protect against antibody-mediated destruction in vitro. This is Outer surface protein C from Borreliella afzelii (strain PKo) (Borrelia afzelii).